A 571-amino-acid polypeptide reads, in one-letter code: Phosphoenolpyruvate-protein phosphotransferase (571 aa).

Catalysis depends on H207, which acts as the Tele-phosphohistidine intermediate. Phosphoenolpyruvate is bound by residues R312 and R348. Mg(2+)-binding residues include E435 and D459. Phosphoenolpyruvate contacts are provided by residues N458–D459 and R469. C506 (proton donor) is an active-site residue.

Belongs to the PEP-utilizing enzyme family. In terms of assembly, homodimer. The cofactor is Mg(2+).

It is found in the cytoplasm. It carries out the reaction L-histidyl-[protein] + phosphoenolpyruvate = N(pros)-phospho-L-histidyl-[protein] + pyruvate. Its function is as follows. General (non sugar-specific) component of the phosphoenolpyruvate-dependent sugar phosphotransferase system (sugar PTS). This major carbohydrate active-transport system catalyzes the phosphorylation of incoming sugar substrates concomitantly with their translocation across the cell membrane. Enzyme I transfers the phosphoryl group from phosphoenolpyruvate (PEP) to the phosphoryl carrier protein (HPr). This is Phosphoenolpyruvate-protein phosphotransferase (ptsI) from Chlamydia trachomatis serovar D (strain ATCC VR-885 / DSM 19411 / UW-3/Cx).